The primary structure comprises 1210 residues: Histone-lysine N-methyltransferase EHMT2 (1210 aa).

The segment covering 1–23 (MAAAAGAAAAAAAEGEAPAEMGA) has biased composition (low complexity). Disordered stretches follow at residues 1-262 (MAAA…LEEW) and 280-386 (DERV…EYME). Ala2 carries the N-acetylalanine modification. The segment covering 26 to 38 (LEKETRGATERVH) has biased composition (basic and acidic residues). Ser40 bears the Phosphoserine mark. A Phosphothreonine modification is found at Thr44. Phosphoserine is present on Ser47. Low complexity predominate over residues 105–128 (GRILLGHATKSFPSSPSKGGSCPS). Ser140 carries the post-translational modification Phosphoserine. Positions 155 to 165 (PGAQGAAAAGS) are enriched in low complexity. Ser173 is subject to Phosphoserine. At Lys185 the chain carries N6,N6,N6-trimethyllysine; by EHMT2; alternate. Position 185 is an N6,N6-dimethyllysine; by EHMT2; alternate (Lys185). Residues 198 to 216 (PEKRPPEIQHFRMSDDVHS) are compositionally biased toward basic and acidic residues. Glycyl lysine isopeptide (Lys-Gly) (interchain with G-Cter in SUMO2) cross-links involve residues Lys219 and Lys229. A phosphoserine mark is found at Ser232, Ser242, and Ser246. A compositionally biased stretch (basic and acidic residues) spans 280-291 (DERVDSDSKSEV). The span at 298 to 327 (LSEEEEEEEEEEEEEEEEEEEEEEEEDEES) shows a compositional bias: acidic residues. The span at 338-347 (GRRKAKKKWR) shows a compositional bias: basic residues. Phosphoserine occurs at positions 350, 412, and 413. The interval 548–608 (IPRGDGVTPP…LADTIDSSGP (61 aa)) is disordered. Position 555 is a phosphothreonine (Thr555). Position 569 is a phosphoserine (Ser569). Residue Lys634 forms a Glycyl lysine isopeptide (Lys-Gly) (interchain with G-Cter in SUMO2) linkage. ANK repeat units follow at residues 649-678 (FHPR…DPNF), 684-713 (SKRT…NINA), 717-746 (QQRT…CVYS), 750-780 (DGST…DVNA), 784-813 (GGWT…DVTL), 817-846 (EENI…DLHA), and 850-879 (HGDT…NPEL). Positions 817-819 (EEN) are histone H3K9me binding. A Pre-SET domain is found at 972-1035 (QHCTCVDDCS…NCKNRVVQSG (64 aa)). Zn(2+) contacts are provided by Cys974, Cys976, Cys980, Cys985, Cys987, Cys1017, Cys1021, Cys1023, and Cys1027. The region spanning 1038-1155 (VRLQLYRTAK…TGEELGFDYG (118 aa)) is the SET domain. S-adenosyl-L-methionine-binding positions include 1048 to 1050 (MGW), Tyr1085, and 1112 to 1113 (NH). The interval 1074–1093 (DAEADVREDDSYLFDLDNKD) is interaction with histone H3. A Zn(2+)-binding site is contributed by Cys1115. The interval 1154-1157 (YGDR) is interaction with histone H3. The Post-SET domain occupies 1164–1180 (KYFTCQCGSEKCKHSAE). Cys1168 serves as a coordination point for Zn(2+). An S-adenosyl-L-methionine-binding site is contributed by Gln1169. Residues Cys1170 and Cys1175 each contribute to the Zn(2+) site. Ser1204 carries the post-translational modification Phosphoserine. A Phosphothreonine modification is found at Thr1210.

It belongs to the class V-like SAM-binding methyltransferase superfamily. Histone-lysine methyltransferase family. Suvar3-9 subfamily. Heterodimer; heterodimerizes with EHMT1/GLP. Interacts with GFI1B and WIZ. Part of the E2F6.com-1 complex in G0 phase composed of E2F6, MGA, MAX, TFDP1, CBX3, BAT8, EHMT1, RING1, RNF2, MBLR, L3MBTL2 and YAF2. Part of a complex composed of TRIM28, HDAC1, HDAC2 and EHMT2. Interacts with UHRF1. Interacts with CDYL. Interacts with REST only in the presence of CDYL. Part of a complex containing at least CDYL, REST, WIZ, SETB1, EHMT1 and EHMT2. Interacts with PRDM9 and CDYL; interaction only takes place when PRDM9 is bound to hotspot DNA. Interacts with SMYD5. Methylated at Lys-185; automethylated. Expressed in all tissues examined, with high levels in fetal liver, thymus, lymph node, spleen and peripheral blood leukocytes and lower level in bone marrow.

The protein resides in the nucleus. The protein localises to the chromosome. It catalyses the reaction N(6)-methyl-L-lysyl(9)-[histone H3] + S-adenosyl-L-methionine = N(6),N(6)-dimethyl-L-lysyl(9)-[histone H3] + S-adenosyl-L-homocysteine + H(+). The catalysed reaction is L-lysyl(9)-[histone H3] + S-adenosyl-L-methionine = N(6)-methyl-L-lysyl(9)-[histone H3] + S-adenosyl-L-homocysteine + H(+). Its function is as follows. Histone methyltransferase that specifically mono- and dimethylates 'Lys-9' of histone H3 (H3K9me1 and H3K9me2, respectively) in euchromatin. H3K9me represents a specific tag for epigenetic transcriptional repression by recruiting HP1 proteins to methylated histones. Also mediates monomethylation of 'Lys-56' of histone H3 (H3K56me1) in G1 phase, leading to promote interaction between histone H3 and PCNA and regulating DNA replication. Also weakly methylates 'Lys-27' of histone H3 (H3K27me). Also required for DNA methylation, the histone methyltransferase activity is not required for DNA methylation, suggesting that these 2 activities function independently. Probably targeted to histone H3 by different DNA-binding proteins like E2F6, MGA, MAX and/or DP1. May also methylate histone H1. In addition to the histone methyltransferase activity, also methylates non-histone proteins: mediates dimethylation of 'Lys-373' of p53/TP53. Also methylates CDYL, WIZ, ACIN1, DNMT1, HDAC1, ERCC6, KLF12 and itself. The sequence is that of Histone-lysine N-methyltransferase EHMT2 (EHMT2) from Homo sapiens (Human).